A 375-amino-acid chain; its full sequence is MAATAQYLPRNNSLPSNPLMHPDSDRMHQGTTYREVQKMMHQEYLQGLATNAGHHMSLTPHQWLPNPASDWGSGSHLGVQAEHAKSGVQSNREDLSSGFHHHRSHLVHQQSPSSHAWAQSGGHHLAPMSPSSNSHQPLIYSQSSYTNLNGMLGPQASSLHHSMRDPLHDDPGVHDTQVDSPPQHLGHHQDHSDEDAPSSDDLEQFAKQFKQRRIKLGFTQADVGLALGTLYGNVFSQTTICRFEALQLSFKNMCKLKPLLNKWLEETDSTTGSPTNLDKIAAQGRKRKKRTSIEVGVKGALENHFLKCPKPSAHEITSLADSLQLEKEVVRVWFCNRRQKEKRMTPAGVPHPPMEDVYSQAETPPLHHTLQTSVQ.

Disordered stretches follow at residues 1–29 (MAAT…RMHQ), 67–138 (PASD…HQPL), and 151–200 (MLGP…PSSD). 3 stretches are compositionally biased toward polar residues: residues 107–117 (VHQQSPSSHAW), 129–138 (SPSSNSHQPL), and 151–160 (MLGPQASSLH). Over residues 162-177 (SMRDPLHDDPGVHDTQ) the composition is skewed to basic and acidic residues. The POU-specific domain occupies 194 to 268 (EDAPSSDDLE…LLNKWLEETD (75 aa)). The homeobox DNA-binding region spans 286–345 (KRKKRTSIEVGVKGALENHFLKCPKPSAHEITSLADSLQLEKEVVRVWFCNRRQKEKRMT).

This sequence belongs to the POU transcription factor family. Class-3 subfamily. In embryos at the neural fold stage, localized primarily in the anterior neural plate, and localized mostly in the anterior region of the nerve cord of neurula stage embryos. In tailbud stages, expressed predominantly in the eye and brain, with weak expression along the length of the nerve cord. In adults, expressed in skin and brain.

It localises to the nucleus. Its function is as follows. Acts as a transcription factor. May play a role in neuronal differentiation. This chain is POU domain, class 3, transcription factor 1-A (pou3f1-a), found in Xenopus laevis (African clawed frog).